The following is a 643-amino-acid chain: DNA polymerase III subunit tau (643 aa).

45 to 52 (GTRGVGKT) contacts ATP. Residues Cys64, Cys73, Cys76, and Cys79 each coordinate Zn(2+). The interval 385–404 (TPTQVPPQPQSAPQQAPTVP) is disordered.

Belongs to the DnaX/STICHEL family. The DNA polymerase III holoenzyme complex contains at least 10 different subunits organized into 3 functionally essential subassemblies: the Pol III core, the beta sliding clamp processivity factor and the clamp-loading complex. The Pol III core (subunits alpha, epsilon and theta) contains the polymerase and the 3'-5' exonuclease proofreading activities. The polymerase is tethered to the template via the dimeric beta sliding clamp processivity factor. The clamp-loading complex (also called gamma complex) assembles the beta sliding clamp onto the primed template and plays a central role in the organization and communication at the replication fork. The clamp-loading complex contains delta, delta', psi and chi, and 3 copies of either or both of two different DnaX proteins, gamma and tau. The DNA replisome complex has a single clamp loader (3 tau and 1 each of delta, delta', psi and chi subunits) which binds 3 Pol III cores (1 core on the leading strand and 2 on the lagging strand) each with a beta sliding clamp dimer. Additional proteins in the replisome are other copies of gamma, psi and chi, Ssb, DNA helicase and RNA primase. The clamp loader hydrolyzes ATP to assemble the beta processivity factor onto the primed template and plays a central role in the organization and communication at the replication fork; the minimal complex to load the beta sliding clamp on DNA is delta, delta', gamma.

The catalysed reaction is DNA(n) + a 2'-deoxyribonucleoside 5'-triphosphate = DNA(n+1) + diphosphate. In terms of biological role, part of the beta sliding clamp loading complex, which hydrolyzes ATP to load the beta clamp onto primed DNA to form the DNA replication pre-initiation complex. DNA polymerase III is a complex, multichain enzyme responsible for most of the replicative synthesis in bacteria. This DNA polymerase also exhibits 3'-5' exonuclease activity. The gamma complex (gamma(3),delta,delta') is thought to load beta dimers onto DNA by binding ATP which alters the complex's conformation so it can bind beta sliding clamp dimers and open them at one interface. Primed DNA is recognized, ATP is hydrolyzed releasing the gamma complex and closing the beta sliding clamp ring around the primed DNA. Serves as a scaffold to trimerize the core complex. Functionally, interacts with the delta and delta' subunits to transfer the beta subunit on the DNA. Interacts with ATP, drives ATP-induced conformational changes in the gamma complex that opens the beta sliding clamp ring. After loading of primed DNA ATP is hydrolyzed and the beta sliding clamp ring closes. The polypeptide is DNA polymerase III subunit tau (dnaX) (Escherichia coli (strain K12)).